The sequence spans 553 residues: Non-SCF-type F-box protein ROY1 (553 aa).

Residues 3 to 49 (FQDQDIFIVFSHASLFLNQNDLLSLSLTSKKMHDMIAIPRLYSNIHI) form the F-box domain.

In terms of assembly, interacts with SKP1 and YPT32; SKP1 is required for the interaction with YPT32.

The protein resides in the cytoplasm. It localises to the nucleus. Its subcellular location is the cytoplasmic vesicle membrane. In terms of biological role, non-SCF-type F-box protein involved in the endocytic with the vacuolar sorting pathway. Acts as a repressor of YPT52 by inhibiting the formation of active, GTP-bound, YPT52. Involved in the defense mechanism against methylmercury toxicity. The sequence is that of Non-SCF-type F-box protein ROY1 (ROY1) from Saccharomyces cerevisiae (strain ATCC 204508 / S288c) (Baker's yeast).